A 151-amino-acid chain; its full sequence is Probable cellulase Cel12b (151 aa).

Active-site residues include E50 and E133.

The protein belongs to the glycosyl hydrolase 12 (cellulase H) family.

In terms of biological role, probable cellulase. Can hydrolyze barley beta-glucan in vitro. Could be important for the survival of M.tuberculosis in the environment, perhaps in amoebal hosts. The chain is Probable cellulase Cel12b from Mycobacterium tuberculosis (strain ATCC 25618 / H37Rv).